Here is a 426-residue protein sequence, read N- to C-terminus: Putative FBD-associated F-box protein At5g53635 (426 aa).

Residues 1–45 (MISQLPDPLICHILSHLPIKDLVTTRVLSTRWRSLWLWLPCLELN) enclose the F-box domain. The FBD domain occupies 353-405 (MIQFGSSLVPECLLSSLEFVDIRIPFRGHLEVMKLVRYFLENSAILKKLSLDH).

The chain is Putative FBD-associated F-box protein At5g53635 from Arabidopsis thaliana (Mouse-ear cress).